Reading from the N-terminus, the 340-residue chain is GTP 3',8-cyclase (340 aa).

One can recognise a Radical SAM core domain in the interval 8–227; that stretch reads KLGRPIRDLR…TMIEQHFEID (220 aa). Residue arginine 17 participates in GTP binding. The [4Fe-4S] cluster site is built by cysteine 24 and cysteine 28. Tyrosine 30 is an S-adenosyl-L-methionine binding site. [4Fe-4S] cluster is bound at residue cysteine 31. Residue arginine 71 participates in GTP binding. Glycine 75 contributes to the S-adenosyl-L-methionine binding site. Threonine 102 contacts GTP. An S-adenosyl-L-methionine-binding site is contributed by serine 126. Lysine 163 contributes to the GTP binding site. Methionine 197 is an S-adenosyl-L-methionine binding site. Residues cysteine 261 and cysteine 264 each coordinate [4Fe-4S] cluster. 266-268 provides a ligand contact to GTP; it reads RAR. Cysteine 278 provides a ligand contact to [4Fe-4S] cluster.

This sequence belongs to the radical SAM superfamily. MoaA family. In terms of assembly, monomer and homodimer. Requires [4Fe-4S] cluster as cofactor.

The enzyme catalyses GTP + AH2 + S-adenosyl-L-methionine = (8S)-3',8-cyclo-7,8-dihydroguanosine 5'-triphosphate + 5'-deoxyadenosine + L-methionine + A + H(+). It functions in the pathway cofactor biosynthesis; molybdopterin biosynthesis. Functionally, catalyzes the cyclization of GTP to (8S)-3',8-cyclo-7,8-dihydroguanosine 5'-triphosphate. This chain is GTP 3',8-cyclase, found in Staphylococcus aureus (strain USA300).